Consider the following 443-residue polypeptide: Amino-acid acetyltransferase (443 aa).

Residues Glu296 to Lys436 enclose the N-acetyltransferase domain.

This sequence belongs to the acetyltransferase family. ArgA subfamily. In terms of assembly, homohexamer.

It localises to the cytoplasm. The catalysed reaction is L-glutamate + acetyl-CoA = N-acetyl-L-glutamate + CoA + H(+). Its pathway is amino-acid biosynthesis; L-arginine biosynthesis; N(2)-acetyl-L-ornithine from L-glutamate: step 1/4. The protein is Amino-acid acetyltransferase of Salmonella arizonae (strain ATCC BAA-731 / CDC346-86 / RSK2980).